The sequence spans 372 residues: Queuine tRNA-ribosyltransferase (372 aa).

The active-site Proton acceptor is the D92. Residues 92-96 (DSGGF), D146, Q188, and G215 each bind substrate. Residues 246–252 (GIGTLRE) form an RNA binding region. D265 (nucleophile) is an active-site residue. The RNA binding; important for wobble base 34 recognition stretch occupies residues 270–274 (TRLGR). Residues C303, C305, C308, and H334 each contribute to the Zn(2+) site.

This sequence belongs to the queuine tRNA-ribosyltransferase family. As to quaternary structure, homodimer. Within each dimer, one monomer is responsible for RNA recognition and catalysis, while the other monomer binds to the replacement base PreQ1. Requires Zn(2+) as cofactor.

The enzyme catalyses 7-aminomethyl-7-carbaguanine + guanosine(34) in tRNA = 7-aminomethyl-7-carbaguanosine(34) in tRNA + guanine. It functions in the pathway tRNA modification; tRNA-queuosine biosynthesis. In terms of biological role, catalyzes the base-exchange of a guanine (G) residue with the queuine precursor 7-aminomethyl-7-deazaguanine (PreQ1) at position 34 (anticodon wobble position) in tRNAs with GU(N) anticodons (tRNA-Asp, -Asn, -His and -Tyr). Catalysis occurs through a double-displacement mechanism. The nucleophile active site attacks the C1' of nucleotide 34 to detach the guanine base from the RNA, forming a covalent enzyme-RNA intermediate. The proton acceptor active site deprotonates the incoming PreQ1, allowing a nucleophilic attack on the C1' of the ribose to form the product. After dissociation, two additional enzymatic reactions on the tRNA convert PreQ1 to queuine (Q), resulting in the hypermodified nucleoside queuosine (7-(((4,5-cis-dihydroxy-2-cyclopenten-1-yl)amino)methyl)-7-deazaguanosine). This chain is Queuine tRNA-ribosyltransferase, found in Prochlorococcus marinus (strain MIT 9303).